Consider the following 158-residue polypeptide: Phosphopantetheine adenylyltransferase (158 aa).

A substrate-binding site is contributed by Thr-9. ATP is bound by residues 9–10 and His-17; that span reads TF. Substrate is bound by residues Lys-41, Leu-73, and Arg-87. Residues 88–90, Glu-98, and 123–129 each bind ATP; these read GVR and WSYVSST.

The protein belongs to the bacterial CoaD family. In terms of assembly, homohexamer. Mg(2+) serves as cofactor.

It is found in the cytoplasm. It carries out the reaction (R)-4'-phosphopantetheine + ATP + H(+) = 3'-dephospho-CoA + diphosphate. The protein operates within cofactor biosynthesis; coenzyme A biosynthesis; CoA from (R)-pantothenate: step 4/5. Reversibly transfers an adenylyl group from ATP to 4'-phosphopantetheine, yielding dephospho-CoA (dPCoA) and pyrophosphate. This is Phosphopantetheine adenylyltransferase from Histophilus somni (strain 2336) (Haemophilus somnus).